The primary structure comprises 418 residues: Glutamyl-tRNA(Gln) amidotransferase subunit D (418 aa).

An Asparaginase/glutaminase domain is found at 81–407 (PDVKIISTGG…EEAKEMVKKS (327 aa)). Active-site residues include T91, T166, D167, and K243.

This sequence belongs to the asparaginase 1 family. GatD subfamily. Heterodimer of GatD and GatE.

It carries out the reaction L-glutamyl-tRNA(Gln) + L-glutamine + ATP + H2O = L-glutaminyl-tRNA(Gln) + L-glutamate + ADP + phosphate + H(+). Functionally, allows the formation of correctly charged Gln-tRNA(Gln) through the transamidation of misacylated Glu-tRNA(Gln) in organisms which lack glutaminyl-tRNA synthetase. The reaction takes place in the presence of glutamine and ATP through an activated gamma-phospho-Glu-tRNA(Gln). The GatDE system is specific for glutamate and does not act on aspartate. This chain is Glutamyl-tRNA(Gln) amidotransferase subunit D, found in Archaeoglobus fulgidus (strain ATCC 49558 / DSM 4304 / JCM 9628 / NBRC 100126 / VC-16).